Here is a 167-residue protein sequence, read N- to C-terminus: Modulator of smoothened protein (167 aa).

Helical transmembrane passes span 7-29, 68-88, 101-121, and 139-159; these read ISGC…PDWI, TLFF…LLVI, WIAF…PVGF, and VGSS…GLLF.

Its subcellular location is the cell projection. The protein resides in the cilium membrane. It is found in the cell membrane. In terms of biological role, acts as a negative regulator of hedgehog signaling probably by promoting internalization and subsequent degradation of smoothened protein (SMO) present in the ciliary membrane. Plays a role in sonic hedgehog (SHH)-induced spinal neural progenitor cells differentiation. In Danio rerio (Zebrafish), this protein is Modulator of smoothened protein.